Here is a 154-residue protein sequence, read N- to C-terminus: Crossover junction endodeoxyribonuclease RuvC (154 aa).

Catalysis depends on residues D7, E66, and D139. Residues D7, E66, and D139 each contribute to the Mg(2+) site.

The protein belongs to the RuvC family. In terms of assembly, homodimer which binds Holliday junction (HJ) DNA. The HJ becomes 2-fold symmetrical on binding to RuvC with unstacked arms; it has a different conformation from HJ DNA in complex with RuvA. In the full resolvosome a probable DNA-RuvA(4)-RuvB(12)-RuvC(2) complex forms which resolves the HJ. Mg(2+) serves as cofactor.

It is found in the cytoplasm. It carries out the reaction Endonucleolytic cleavage at a junction such as a reciprocal single-stranded crossover between two homologous DNA duplexes (Holliday junction).. Functionally, the RuvA-RuvB-RuvC complex processes Holliday junction (HJ) DNA during genetic recombination and DNA repair. Endonuclease that resolves HJ intermediates. Cleaves cruciform DNA by making single-stranded nicks across the HJ at symmetrical positions within the homologous arms, yielding a 5'-phosphate and a 3'-hydroxyl group; requires a central core of homology in the junction. The consensus cleavage sequence is 5'-(A/T)TT(C/G)-3'. Cleavage occurs on the 3'-side of the TT dinucleotide at the point of strand exchange. HJ branch migration catalyzed by RuvA-RuvB allows RuvC to scan DNA until it finds its consensus sequence, where it cleaves and resolves the cruciform DNA. The sequence is that of Crossover junction endodeoxyribonuclease RuvC from Aliarcobacter butzleri (strain RM4018) (Arcobacter butzleri).